A 335-amino-acid polypeptide reads, in one-letter code: Methionine import ATP-binding protein MetN (335 aa).

The ABC transporter domain maps to 2–241 (IQFQRLHKSY…PKHATTRRFV (240 aa)). 38–45 (GHSGAGKS) provides a ligand contact to ATP.

The protein belongs to the ABC transporter superfamily. Methionine importer (TC 3.A.1.24) family. In terms of assembly, the complex is composed of two ATP-binding proteins (MetN), two transmembrane proteins (MetI) and a solute-binding protein (MetQ).

The protein localises to the cell inner membrane. It catalyses the reaction L-methionine(out) + ATP + H2O = L-methionine(in) + ADP + phosphate + H(+). The catalysed reaction is D-methionine(out) + ATP + H2O = D-methionine(in) + ADP + phosphate + H(+). Part of the ABC transporter complex MetNIQ involved in methionine import. Responsible for energy coupling to the transport system. The chain is Methionine import ATP-binding protein MetN from Xanthomonas axonopodis pv. citri (strain 306).